We begin with the raw amino-acid sequence, 164 residues long: MNLKVGIAVLIIALIVPSAQPYIYRGYDRSSDPNFDMFGRSVAGDNAYRQPLRTLQSPAPMVPRAMPLQRQMYVPPRAPMIAPRVPIRAPMSPVRPGVLQTQPVMPIPYHHPHYYPGYDPPSYDPPDISQPDPPGEYFYHPRPRPNLGIYNPSRITAFNRAYLR.

The first 21 residues, 1–21 (MNLKVGIAVLIIALIVPSAQP), serve as a signal peptide directing secretion.

Component of the acid-soluble organic matrix of calcified layers of the shell (at protein level).

It localises to the secreted. The polypeptide is Proline-rich protein 2 (Lottia gigantea (Giant owl limpet)).